The primary structure comprises 681 residues: Cobalamin-dependent radical SAM methyltransferase TokK (681 aa).

The B12-binding domain maps to 1-144; the sequence is MSAELASRGR…ATRLSDHPDY (144 aa). Residues asparagine 18, serine 72, tyrosine 74, valine 75, histidine 103, glycine 126, and glutamate 127 each contribute to the cob(II)alamin site. The 226-residue stretch at 192–417 folds into the Radical SAM core domain; sequence RGLRFYALWE…RMYVERPGTP (226 aa). Residues cysteine 206 and cysteine 210 each coordinate [4Fe-4S] cluster. Phenylalanine 212 is a 5'-deoxyadenosine binding site. Cysteine 213 lines the [4Fe-4S] cluster pocket. Cob(II)alamin is bound by residues aspartate 214 and cysteine 249. The 5'-deoxyadenosine site is built by glutamine 312, glutamate 349, and glycine 384.

Belongs to the methyltransferase superfamily. Requires [4Fe-4S] cluster as cofactor. Cob(II)alamin is required as a cofactor.

Its pathway is antibiotic biosynthesis. Functionally, methyltransferase involved in the biosynthesis of the beta-lactam carbapenem antibiotic asparenomycin. Catalyzes three consecutive S-adenosyl-L-methionine-dependent methylations to build out the C6-isopropyl side chain in a stereocontrolled manner. This is Cobalamin-dependent radical SAM methyltransferase TokK from Streptomyces tokunonensis.